Consider the following 315-residue polypeptide: MSESLRIIFAGTPDFAARHLDALLSSGHNVVGVFTQPDRPAGRGKKLMPSPVKVLAEEKGLPVFQPVSLRPQENQQLVADLQADVMVVVAYGLILPKAVLEMPRLGCINVHGSLLPRWRGAAPIQRSLWAGDAETGVTIMQMDVGLDTGDMLYKLSCPITAEDTSGTLYDKLAELGPQGLITTLKQLADGTAKPEVQDETLVTYAEKLSKEEARIDWSLSAAQLERCIRAFNPWPMSWLEIEGQPVKVWKASVIDTATNAAPGTILEANKQGIQVATGDGILNLLSLQPAGKKAMSAQDLLNSRREWFVPGNRLA.

Residue 113 to 116 (SLLP) participates in (6S)-5,6,7,8-tetrahydrofolate binding.

The protein belongs to the Fmt family.

It catalyses the reaction L-methionyl-tRNA(fMet) + (6R)-10-formyltetrahydrofolate = N-formyl-L-methionyl-tRNA(fMet) + (6S)-5,6,7,8-tetrahydrofolate + H(+). Its function is as follows. Attaches a formyl group to the free amino group of methionyl-tRNA(fMet). The formyl group appears to play a dual role in the initiator identity of N-formylmethionyl-tRNA by promoting its recognition by IF2 and preventing the misappropriation of this tRNA by the elongation apparatus. This is Methionyl-tRNA formyltransferase from Shigella dysenteriae serotype 1 (strain Sd197).